We begin with the raw amino-acid sequence, 959 residues long: ATP-dependent 6-phosphofructokinase subunit beta (959 aa).

Residues 2–573 (TVTTPFVNGT…HLNNFMAINS (572 aa)) are N-terminal catalytic PFK domain 1. The tract at residues 144-167 (KNAVSTKPTPPPAPEASAESGLSS) is disordered. Residue Thr-152 is modified to Phosphothreonine. The segment covering 158–167 (EASAESGLSS) has biased composition (low complexity). Residues Ser-163 and Ser-171 each carry the phosphoserine modification. ATP contacts are provided by residues Gly-206, 270–271 (RC), and 300–303 (GDGS). Mg(2+) is bound at residue Asp-301. Residues 346-348 (SID), Arg-383, 390-392 (MGR), Glu-447, Arg-475, and 481-484 (HVQR) each bind beta-D-fructose 6-phosphate. Asp-348 functions as the Proton acceptor in the catalytic mechanism. Residues 574–587 (ADHNEPKLPKDKRL) form an interdomain linker region. The interval 588-959 (KIAIVNVGAP…DHLVGRKRVD (372 aa)) is C-terminal regulatory PFK domain 2. Beta-D-fructose 2,6-bisphosphate contacts are provided by residues Arg-658, 716–720 (TLSNN), Arg-754, and 761–763 (QGG). Ser-803 carries the phosphoserine modification. Beta-D-fructose 2,6-bisphosphate is bound by residues Lys-847, 853 to 856 (HVQQ), and Arg-935.

The protein belongs to the phosphofructokinase type A (PFKA) family. ATP-dependent PFK group I subfamily. Eukaryotic two domain clade 'E' sub-subfamily. In terms of assembly, heterooctamer of 4 alpha and 4 beta chains. Requires Mg(2+) as cofactor.

It is found in the cytoplasm. It localises to the mitochondrion outer membrane. It catalyses the reaction beta-D-fructose 6-phosphate + ATP = beta-D-fructose 1,6-bisphosphate + ADP + H(+). It participates in carbohydrate degradation; glycolysis; D-glyceraldehyde 3-phosphate and glycerone phosphate from D-glucose: step 3/4. Its activity is regulated as follows. Allosterically activated by ADP, AMP, or fructose 2,6-bisphosphate, and allosterically inhibited by ATP or citrate. In terms of biological role, catalyzes the phosphorylation of D-fructose 6-phosphate to fructose 1,6-bisphosphate by ATP, the first committing step of glycolysis. This is ATP-dependent 6-phosphofructokinase subunit beta (PFK2) from Saccharomyces cerevisiae (strain ATCC 204508 / S288c) (Baker's yeast).